Here is a 581-residue protein sequence, read N- to C-terminus: Semenogelin-2 (581 aa).

The N-terminal stretch at 1–23 is a signal peptide; the sequence is MKSIILFVLSLLLILEKQAAVMG. 4 disordered regions span residues 24-62, 132-157, 173-194, and 271-581; these read QKGGSKGQSPSGSSQFPHGQKGQHYFGQKDQQHTKSKGS, GGKAHRGTQNPSQDQGNSPSGRGISS, KEQASASGAQKGRTQGRSQSSY, and NLNQ…PIST. Polar residues-rich tracts occupy residues 138 to 157 and 174 to 194; these read GTQNPSQDQGNSPSGRGISS and EQASASGAQKGRTQGRSQSSY. Residues 291–310 are compositionally biased toward basic and acidic residues; the sequence is HTEERQLNHGEKSVQKDISK. The segment covering 324–333 has biased composition (polar residues); sequence KSQNQVTIHS. Residues 334-344 show a composition bias toward basic and acidic residues; that stretch reads QDQEHGHKENK. Residues 366–396 are compositionally biased toward polar residues; the sequence is KSVSKGSISIQTEEQIHGKSQNQVRIPSQAQ. Basic and acidic residues-rich tracts occupy residues 412–425 and 455–464; these read TEERRLNSGEKDIQ and DQEHGHKENK. Polar residues-rich tracts occupy residues 481 to 497 and 505 to 529; these read GKNTQKDVSQSSISFQT and SQIQTPNPNQDQWSGQNAKGKSGQS. Composition is skewed to basic and acidic residues over residues 530–545 and 558–581; these read ADREQDLLSHEQKGRY and TEHEVARDDHLTQQYNEDRNPIST.

This sequence belongs to the semenogelin family. Interacts with SERPINA5.

It localises to the secreted. Functionally, participates in the formation of a gel matrix (sperm coagulum) entrapping the accessory gland secretions and ejaculated spermatozoa. The protein is Semenogelin-2 (SEMG2) of Pongo abelii (Sumatran orangutan).